Here is a 64-residue protein sequence, read N- to C-terminus: Large ribosomal subunit protein uL30 (64 aa).

Belongs to the universal ribosomal protein uL30 family. In terms of assembly, part of the 50S ribosomal subunit.

The sequence is that of Large ribosomal subunit protein uL30 from Rhodopseudomonas palustris (strain BisB18).